The primary structure comprises 517 residues: Ribonuclease Y (517 aa).

A helical transmembrane segment spans residues 1–21; the sequence is MIESLIALIAAIVGLGIGYLV. A KH domain is found at 207–273; the sequence is LINVINIKND…TKVIELLVED (67 aa). One can recognise an HD domain in the interval 333–426; sequence ALAHSLEVAH…VCAADTLSAA (94 aa).

This sequence belongs to the RNase Y family.

Its subcellular location is the cell membrane. Its function is as follows. Endoribonuclease that initiates mRNA decay. This chain is Ribonuclease Y, found in Campylobacter jejuni subsp. doylei (strain ATCC BAA-1458 / RM4099 / 269.97).